We begin with the raw amino-acid sequence, 270 residues long: 5'-nucleotidase SurE (270 aa).

A divalent metal cation contacts are provided by Asp-8, Asp-9, Ser-40, and Asn-98.

The protein belongs to the SurE nucleotidase family. Requires a divalent metal cation as cofactor.

The protein resides in the cytoplasm. It carries out the reaction a ribonucleoside 5'-phosphate + H2O = a ribonucleoside + phosphate. Functionally, nucleotidase that shows phosphatase activity on nucleoside 5'-monophosphates. This chain is 5'-nucleotidase SurE, found in Cyanothece sp. (strain PCC 7425 / ATCC 29141).